Consider the following 326-residue polypeptide: Cytosolic Fe-S cluster assembly factor NBP35 (326 aa).

The tract at residues Met-1–Ser-38 is disordered. Over residues Thr-16–Pro-26 the composition is skewed to basic and acidic residues. Positions 25, 39, 42, and 48 each coordinate [4Fe-4S] cluster. Gly-78–Ser-85 serves as a coordination point for ATP. Residues Cys-251 and Cys-254 each coordinate [4Fe-4S] cluster.

Belongs to the Mrp/NBP35 ATP-binding proteins family. NUBP1/NBP35 subfamily. Heterotetramer of 2 NBP35 and 2 CFD1 chains. The cofactor is [4Fe-4S] cluster.

It is found in the cytoplasm. It localises to the nucleus. Component of the cytosolic iron-sulfur (Fe/S) protein assembly (CIA) machinery. Required for maturation of extramitochondrial Fe-S proteins. The NBP35-CFD1 heterotetramer forms a Fe-S scaffold complex, mediating the de novo assembly of an Fe-S cluster and its transfer to target apoproteins. Required for biogenesis and export of both ribosomal subunits, which may reflect a role in assembly of the Fe/S clusters in RLI1, a protein which performs rRNA processing and ribosome export. The polypeptide is Cytosolic Fe-S cluster assembly factor NBP35 (Kluyveromyces lactis (strain ATCC 8585 / CBS 2359 / DSM 70799 / NBRC 1267 / NRRL Y-1140 / WM37) (Yeast)).